A 203-amino-acid chain; its full sequence is Large ribosomal subunit protein uL13 (203 aa).

Alanine 2 carries the N-acetylalanine modification. Arginine 59 is modified (citrulline). Phosphoserine is present on serine 77. At arginine 140 the chain carries Citrulline. Residue lysine 191 is modified to N6-acetyllysine.

This sequence belongs to the universal ribosomal protein uL13 family. In terms of assembly, component of the 60S ribosome. Component of the GAIT complex. Interacts with EIF4G1. Phosphorylation at Ser-77 upon interferon-gamma treatment in macrophages involves a DAPK1-DAPK3 kinase cascade and is causing release from the ribosome, association with the GAIT complex and subsequent involvement in transcript-selective translation inhibition. Post-translationally, citrullinated by PADI4.

The protein localises to the cytoplasm. Associated with ribosomes but is not required for canonical ribosome function and has extra-ribosomal functions. Component of the GAIT (gamma interferon-activated inhibitor of translation) complex which mediates interferon-gamma-induced transcript-selective translation inhibition in inflammation processes. Upon interferon-gamma activation and subsequent phosphorylation dissociates from the ribosome and assembles into the GAIT complex which binds to stem loop-containing GAIT elements in the 3'-UTR of diverse inflammatory mRNAs (such as ceruplasmin) and suppresses their translation. In the GAIT complex interacts with m7G cap-bound eIF4G at or near the eIF3-binding site and blocks the recruitment of the 43S ribosomal complex. Involved in methylation of rRNA. The protein is Large ribosomal subunit protein uL13 (RPL13A) of Canis lupus familiaris (Dog).